Consider the following 210-residue polypeptide: DNA-directed RNA polymerases I, II, and III subunit RPABC1 (210 aa).

N-acetylmethionine is present on M1. K81 is covalently cross-linked (Glycyl lysine isopeptide (Lys-Gly) (interchain with G-Cter in SUMO2)).

Belongs to the archaeal Rpo5/eukaryotic RPB5 RNA polymerase subunit family. In terms of assembly, component of the RNA polymerase I (Pol I), RNA polymerase II (Pol II) and RNA polymerase III (Pol III) complexes consisting of at least 13, 12 and 17 subunits, respectively. Pol I complex consists of a ten-subunit catalytic core composed of POLR1A/RPA1, POLR1B/RPA2, POLR1C/RPAC1, POLR1D/RPAC2, POLR1H/RPA12, POLR2E/RPABC1, POLR2F/RPABC2, POLR2H/RPABC3, POLR2K/RPABC4 and POLR2L/RPABC5; a mobile stalk subunit POLR1F/RPA43 protruding from the core and additional subunits homologous to general transcription factors POLR1E/RPA49 and POLR1G/RPA34. Part of Pol I pre-initiation complex (PIC), in which Pol I core assembles with RRN3 and promoter-bound UTBF and SL1/TIF-IB complex. Pol II complex contains a ten-subunit catalytic core composed of POLR2A/RPB1, POLR2B/RPB2, POLR2C/RPB3, POLR2I/RPB9, POLR2J/RPB11, POLR2E/RPABC1, POLR2F/RPABC2, POLR2H/RPABC3, POLR2K/RPABC4 and POLR2L/RPABC5 and a mobile stalk composed of two subunits POLR2D/RPB4 and POLR2G/RPB7. Part of Pol II(G) complex, in which Pol II core associates with an additional subunit POLR2M; unlike conventional Pol II, Pol II(G) functions as a transcriptional repressor. Part of TBP-based Pol II pre-initiation complex (PIC), in which Pol II core assembles with general transcription factors and other specific initiation factors including GTF2E1, GTF2E2, GTF2F1, GTF2F2, TCEA1, ERCC2, ERCC3, GTF2H2, GTF2H3, GTF2H4, GTF2H5, GTF2A1, GTF2A2, GTF2B and TBP; this large multi-subunit PIC complex mediates DNA unwinding and targets Pol II core to the transcription start site where the first phosphodiester bond forms. In Pol II complex, this subunit is present in 2-fold molar excess over the other subunits. Pol III complex consists of a ten-subunit catalytic core composed of POLR3A/RPC1, POLR3B/RPC2, POLR1C/RPAC1, POLR1D/RPAC2, POLR3K/RPC10, POLR2E/RPABC1, POLR2F/RPABC2, POLR2H/RPABC3, POLR2K/RPABC4 and POLR2L/RPABC5; a mobile stalk composed of two subunits POLR3H/RPC8 and CRCP/RPC9, protruding from the core and functioning primarily in transcription initiation; and additional subunits homologous to general transcription factors of the RNA polymerase II machinery, POLR3C/RPC3-POLR3F/RPC6-POLR3G/RPC7 heterotrimer required for transcription initiation and POLR3D/RPC4-POLR3E/RPC5 heterodimer involved in both transcription initiation and termination. Component of the PAQosome complex which is responsible for the biogenesis of several protein complexes and which consists of R2TP complex members RUVBL1, RUVBL2, RPAP3 and PIH1D1, URI complex members PFDN2, PFDN6, PDRG1, UXT and URI1 as well as ASDURF, POLR2E and DNAAF10/WDR92. Interacts with URI1. (Microbial infection) Interacts with HBV protein X.

The protein resides in the nucleus. It is found in the nucleolus. DNA-dependent RNA polymerase catalyzes the transcription of DNA into RNA using the four ribonucleoside triphosphates as substrates. Common component of RNA polymerases I, II and III which synthesize ribosomal RNA precursors, mRNA precursors and many functional non-coding RNAs, and small RNAs, such as 5S rRNA and tRNAs, respectively. Pol II is the central component of the basal RNA polymerase II transcription machinery. Pols are composed of mobile elements that move relative to each other. In Pol II, POLR2E/RPABC1 is part of the lower jaw surrounding the central large cleft and thought to grab the incoming DNA template. This chain is DNA-directed RNA polymerases I, II, and III subunit RPABC1, found in Homo sapiens (Human).